We begin with the raw amino-acid sequence, 432 residues long: Adenylosuccinate synthetase (432 aa).

GTP-binding positions include 13-19 (GDEGKGK) and 41-43 (GHT). The active-site Proton acceptor is the aspartate 14. Residues aspartate 14 and glycine 41 each coordinate Mg(2+). IMP is bound by residues 14–17 (DEGK), 39–42 (NAGH), threonine 130, arginine 144, glutamine 225, threonine 240, and arginine 304. Histidine 42 (proton donor) is an active-site residue. 300–306 (ATTGRKR) contributes to the substrate binding site. GTP contacts are provided by residues arginine 306, 332-334 (KLD), and 415-417 (STG).

Belongs to the adenylosuccinate synthetase family. As to quaternary structure, homodimer. Mg(2+) serves as cofactor.

The protein resides in the cytoplasm. It catalyses the reaction IMP + L-aspartate + GTP = N(6)-(1,2-dicarboxyethyl)-AMP + GDP + phosphate + 2 H(+). The protein operates within purine metabolism; AMP biosynthesis via de novo pathway; AMP from IMP: step 1/2. In terms of biological role, plays an important role in the de novo pathway of purine nucleotide biosynthesis. Catalyzes the first committed step in the biosynthesis of AMP from IMP. This Alteromonas mediterranea (strain DSM 17117 / CIP 110805 / LMG 28347 / Deep ecotype) protein is Adenylosuccinate synthetase.